A 219-amino-acid chain; its full sequence is Holliday junction branch migration complex subunit RuvA (219 aa).

A domain I region spans residues 1–67 (MIGWLRGERI…DDGSSLFGFP (67 aa)). The domain II stretch occupies residues 68–146 (DRRERDLFRV…AWSAEKNSDH (79 aa)). The interval 147-161 (SDLSLVDRSDLKSLP) is flexible linker. The tract at residues 162-219 (IEPDPLQDLQLTLSTLGYEDLEIRRAMRAVATGEEVPAANDGDGWLRASLRWLNRPSA) is domain III.

It belongs to the RuvA family. In terms of assembly, homotetramer. Forms an RuvA(8)-RuvB(12)-Holliday junction (HJ) complex. HJ DNA is sandwiched between 2 RuvA tetramers; dsDNA enters through RuvA and exits via RuvB. An RuvB hexamer assembles on each DNA strand where it exits the tetramer. Each RuvB hexamer is contacted by two RuvA subunits (via domain III) on 2 adjacent RuvB subunits; this complex drives branch migration. In the full resolvosome a probable DNA-RuvA(4)-RuvB(12)-RuvC(2) complex forms which resolves the HJ.

The protein resides in the cytoplasm. Its function is as follows. The RuvA-RuvB-RuvC complex processes Holliday junction (HJ) DNA during genetic recombination and DNA repair, while the RuvA-RuvB complex plays an important role in the rescue of blocked DNA replication forks via replication fork reversal (RFR). RuvA specifically binds to HJ cruciform DNA, conferring on it an open structure. The RuvB hexamer acts as an ATP-dependent pump, pulling dsDNA into and through the RuvAB complex. HJ branch migration allows RuvC to scan DNA until it finds its consensus sequence, where it cleaves and resolves the cruciform DNA. This chain is Holliday junction branch migration complex subunit RuvA, found in Synechococcus sp. (strain CC9311).